We begin with the raw amino-acid sequence, 501 residues long: ADP,ATP carrier protein 3 (501 aa).

The next 12 membrane-spanning stretches (helical) occupy residues 23–43, 59–79, 90–110, 146–166, 183–203, 227–247, 293–313, 326–346, 361–381, 383–403, 446–466, and 470–490; these read LKLF…FGAL, IISF…TILY, YIFY…AYII, YALM…LMFW, PVLG…LVFF, IMLQ…MFLF, IALL…PWKA, VNFM…FMII, LLTP…IIFI, EIGT…VGAI, FGKS…PTAT, and IIIY…WNII.

It belongs to the ADP/ATP translocase tlc family.

The protein resides in the cell membrane. Its function is as follows. Provides the rickettsial cell with host ATP in exchange for rickettsial ADP. This is an obligate exchange system. This energy acquiring activity is an important component of rickettsial parasitism. In Rickettsia prowazekii (strain Madrid E), this protein is ADP,ATP carrier protein 3 (tlcC).